Reading from the N-terminus, the 157-residue chain is CAPA peptides (157 aa).

Positions 1–21 (MQPTMRIIVSMALLAYAVASA) are cleaved as a signal peptide. The propeptide occupies 22 to 28 (YHSNVKL). At V42 the chain carries Valine amide. The propeptide occupies 45–66 (ASGNTWQLPLNDLYPEYEPAQV). Q69 bears the Pyrrolidone carboxylic acid; partial mark. V76 is modified (valine amide). Leucine amide occurs at positions 85 and 117. Residues 120-157 (AFKNDDDEITIQNESNDHSEPEQTELIHEDRRKRQTLN) constitute a propeptide that is removed on maturation. A disordered region spans residues 131–157 (QNESNDHSEPEQTELIHEDRRKRQTLN). Residues 134-151 (SNDHSEPEQTELIHEDRR) are compositionally biased toward basic and acidic residues.

This sequence belongs to the pyrokinin family. In terms of tissue distribution, CAPA-periviscerokinin 1: Expressed in corpora cardiaca (CC), corpora allata (CA), antennal lobe (AL) and gnathal ganglion (GNG) (at protein level). Expression detected in most animals in CC and CA and in some animals in AL and GNG (at protein level). CAPA-periviscerokinin 2: Expressed in corpora cardiaca (CC), corpora allata (CA), antennal lobe (AL) and gnathal ganglion (GNG) (at protein level). For non-pyroglutamate form, expression in AL detected in all animals, in CC, CA and GNG in most animals (at protein level). For pyroglutamate form, expression in CC and CA detected in most animals, in AL and GNG in some animals (at protein level). CAPA-periviscerokinin 3: Expressed in corpora cardiaca (CC), corpora allata (CA), antennal lobe (AL) and gnathal ganglion (GNG). Expression detected in most animals in CC and CA and in some animals in AL and GNG (at protein level). CAPA-precursor-related peptide 3: Expressed in corpora cardiaca (CC), corpora allata (CA), antennal lobe (AL) and gnathal ganglion (GNG) (at protein level). Expression in CC and CA detected in some animals, expression in Al and GNG detected in few animals (at protein level). CAPA-trypto-pyrokinin: Expressed in corpora cardiaca (CC), corpora allata (CA), antennal lobe (AL) and gnathal ganglion (GNG) (at protein level). Expression in CC, CA and GNG detected in most animals, in AL in some animals (at protein level).

It is found in the secreted. In terms of biological role, myoactive. The protein is CAPA peptides of Agrotis ipsilon (Black cutworm moth).